Consider the following 735-residue polypeptide: Photosystem I P700 chlorophyll a apoprotein A2 (735 aa).

Transmembrane regions (helical) follow at residues 47–70 (IFAS…FHVA), 136–159 (LYVG…LHLQ), 176–200 (LNHH…HVAI), 274–292 (MAHH…GHMY), 331–354 (LHFQ…QHMY), 370–396 (AALY…IFWI), 418–440 (AIIS…LYVH), and 518–536 (FLVH…LILV). [4Fe-4S] cluster-binding residues include Cys560 and Cys569. Transmembrane regions (helical) follow at residues 576 to 597 (AFYL…YWHW) and 644 to 666 (LSVW…MFLI). The chlorophyll a site is built by His655, Met663, and Tyr671. Trp672 is a binding site for phylloquinone. Residues 708–728 (LVGLAHFSVGYVFTYAAFVIA) form a helical membrane-spanning segment.

Belongs to the PsaA/PsaB family. As to quaternary structure, the PsaA/B heterodimer binds the P700 chlorophyll special pair and subsequent electron acceptors. PSI consists of a core antenna complex that captures photons, and an electron transfer chain that converts photonic excitation into a charge separation. The eukaryotic PSI reaction center is composed of at least 11 subunits. P700 is a chlorophyll a/chlorophyll a' dimer, A0 is one or more chlorophyll a, A1 is one or both phylloquinones and FX is a shared 4Fe-4S iron-sulfur center. is required as a cofactor.

Its subcellular location is the plastid. It is found in the chloroplast thylakoid membrane. It carries out the reaction reduced [plastocyanin] + hnu + oxidized [2Fe-2S]-[ferredoxin] = oxidized [plastocyanin] + reduced [2Fe-2S]-[ferredoxin]. PsaA and PsaB bind P700, the primary electron donor of photosystem I (PSI), as well as the electron acceptors A0, A1 and FX. PSI is a plastocyanin/cytochrome c6-ferredoxin oxidoreductase, converting photonic excitation into a charge separation, which transfers an electron from the donor P700 chlorophyll pair to the spectroscopically characterized acceptors A0, A1, FX, FA and FB in turn. Oxidized P700 is reduced on the lumenal side of the thylakoid membrane by plastocyanin or cytochrome c6. This chain is Photosystem I P700 chlorophyll a apoprotein A2, found in Tetradesmus obliquus (Green alga).